Here is a 2310-residue protein sequence, read N- to C-terminus: Retinal-specific phospholipid-transporting ATPase ABCA4 (2310 aa).

Over 1–21 the chain is Cytoplasmic; the sequence is MGFLRQIQLLLWKNWTLRKRQ. The chain crosses the membrane as a helical span at residues 22–42; sequence KIRFVVELVWPLSLFLVLIWL. Topologically, residues 43–646 are extracellular; the sequence is RNANPLYSQH…MPYPCFVDDS (604 aa). 2 cysteine pairs are disulfide-bonded: Cys-54-Cys-81 and Cys-75-Cys-324. Residue Asn-98 is glycosylated (N-linked (GlcNAc...) asparagine). Residues Ser-336 and Asn-338 each contribute to the Mg(2+) site. A disulfide bridge links Cys-370 with Cys-519. N-linked (GlcNAc...) asparagine glycosylation is found at Asn-415 and Asn-504. Positions 587 and 653 each coordinate an N-all-trans-retinylidenephosphatidylethanolamine. 3 disulfides stabilise this stretch: Cys-641-Cys-1489, Cys-1443-Cys-1454, and Cys-1487-Cys-1501. The chain crosses the membrane as a helical span at residues 647–667; it reads FMIILNRCFPIFMVLAWIYSV. Over 668–699 the chain is Cytoplasmic; it reads SMTVKGIVLEKELRLKETLKNQGVSNAVIWCT. The helical transmembrane segment at 700 to 720 threads the bilayer; that stretch reads WFLDSFSIMALSIFLLTLFIM. Residues 721–730 are Extracellular-facing; it reads HGRILHYSDP. The chain crosses the membrane as a helical span at residues 731–751; it reads FILFLFLLAFATATIMQSFLL. Residues 752 to 759 are Cytoplasmic-facing; sequence STLFSKAS. A helical membrane pass occupies residues 760 to 780; it reads LAAACSGVIYFTLYLPHVLCF. Residues 781-835 lie on the Extracellular side of the membrane; it reads AWQDRMTADLKTTVSLLSSVAFGFGTEYLVRFEEQGLGLQWSNIGKSPLEGDEFS. A helical transmembrane segment spans residues 836-856; the sequence is FLLSMKMMLLDAALYGLLAWY. The Cytoplasmic segment spans residues 857 to 1375; that stretch reads LDQVFPGDYG…IRSRKDFVAQ (519 aa). The interval 891 to 910 is disordered; the sequence is ERALEKTEPLTEEMEDPEHP. At Thr-901 the chain carries Phosphothreonine. In terms of domain architecture, ABC transporter 1 spans 929 to 1160; it reads VCVKNLVKVF…FGTGFYLTLV (232 aa). Positions 938, 966, and 969 each coordinate ATP. Thr-970 lines the Mg(2+) pocket. ATP contacts are provided by Thr-971, Gln-1010, Lys-1054, Gly-1064, Gly-1065, and His-1118. Ser-1185 is modified (phosphoserine). The disordered stretch occupies residues 1311-1344; that stretch reads RQYAQAPHTCSPGQVDPPKGQPSPEPEDPGVPFN. A helical membrane pass occupies residues 1376-1396; that stretch reads IVLPATFVFLALMLSIIVPPF. Residues 1397–1726 lie on the Extracellular side of the membrane; it reads GEFPALTLHP…VSPTTYWLTN (330 aa). N-linked (GlcNAc...) asparagine glycosylation is present at Asn-1468. N-linked (GlcNAc...) asparagine glycans are attached at residues Asn-1528, Asn-1587, and Asn-1661. A helical transmembrane segment spans residues 1727–1747; the sequence is FLWDIMNYAVSAGLVVGIFIG. Over 1748–1758 the chain is Cytoplasmic; that stretch reads FQKKAYTSPDN. A helical transmembrane segment spans residues 1759 to 1779; it reads LPALVSLLMLYGWAVIPMMYP. Residues 1780-1791 lie on the Extracellular side of the membrane; the sequence is ASFLFEVPSTAY. Residues 1792 to 1812 form a helical membrane-spanning segment; it reads VALSCANLFIGINSSAITFVL. The Cytoplasmic segment spans residues 1813-1830; that stretch reads ELFENNRTLLRFNAMLRK. A helical membrane pass occupies residues 1831-1851; that stretch reads LLIVFPHFCLGRGLIDLALSQ. At 1852-1872 the chain is on the extracellular side; that stretch reads AVTDVYAQFGEEYSANPFQWD. Residues 1873–1893 traverse the membrane as a helical segment; sequence LIGKNLVAMAIEGVVYFLLTL. At 1894 to 2310 the chain is on the cytoplasmic side; sequence LIQHHFFLTR…AEDKHTRSPQ (417 aa). The ABC transporter 2 domain maps to 1937-2169; it reads LKLNELTKVY…FGDGYIVTMK (233 aa). The ATP site is built by Asn-1973, Gly-1974, Lys-1977, Thr-1978, Thr-1979, and Gly-2072. Residue Thr-1978 participates in Mg(2+) binding. The interval 2243-2248 is essential for ATP binding and ATPase activity; it reads VFVNFA. The interval 2266–2310 is disordered; that stretch reads ASWQAKLEEKSGRLQTQEPLPAGSEQLANGSNPTAAEDKHTRSPQ. The segment covering 2301-2310 has biased composition (basic and acidic residues); that stretch reads AEDKHTRSPQ.

The protein belongs to the ABC transporter superfamily. ABCA family. In terms of processing, N-glycosylated. Proteolytic cleavage by trypsin leads to a 120-kDa N-terminal fragment and a 115-kDa C-terminal fragment that are linked through disulfide bonds. Post-translationally, phosphorylation is independent of light exposure and modulates ATPase activity. Retinal-specific. Seems to be exclusively found in the rims of rod photoreceptor cells.

It is found in the membrane. It localises to the endoplasmic reticulum. The protein localises to the cell projection. Its subcellular location is the cilium. The protein resides in the photoreceptor outer segment. It carries out the reaction an N-all-trans-retinylidenephosphatidylethanolamine(out) + ATP + H2O = an N-all-trans-retinylidenephosphatidylethanolamine(in) + ADP + phosphate + H(+). The enzyme catalyses ATP + H2O + phospholipidSide 1 = ADP + phosphate + phospholipidSide 2.. It catalyses the reaction a 1,2-diacyl-sn-glycero-3-phosphoethanolamine(out) + ATP + H2O = a 1,2-diacyl-sn-glycero-3-phosphoethanolamine(in) + ADP + phosphate + H(+). The catalysed reaction is N-11-cis-retinylidenephosphatidylethanolamine(out) + ATP + H2O = N-11-cis-retinylidenephosphatidylethanolamine(in) + ADP + phosphate + H(+). It carries out the reaction ATP + H2O = ADP + phosphate + H(+). Its activity is regulated as follows. ATPase activity is decreased by cholesterol and ceramide. Phospholipids translocase activity is highly reduced by berylium fluoride and aluminum floride. N-ethylmaleimide inhibits phospholipid translocase activity. Its function is as follows. Flippase that catalyzes in an ATP-dependent manner the transport of retinal-phosphatidylethanolamine conjugates like the 11-cis and all-trans isomers of N-retinylidene-phosphatidylethanolamine from the lumen to the cytoplasmic leaflet of photoreceptor outer segment disk membranes, where N-cis-retinylidene-phosphatidylethanolamine (N-cis-R-PE) is then isomerized to its all-trans isomer (N-trans-R-PE) and reduced by RDH8 to produce all-trans-retinol (all-trans-rol) and therefore prevents the accumulation of excess of 11-cis-retinal and its schiff-base conjugate and the formation of toxic bisretinoid. Displays ATPase activity in vitro in absence of retinal substrate. May display GTPase activity that is strongly influenced by the lipid environment and the presence of retinoid compounds. Binds the unprotonated form of N-retinylidene-phosphatidylethanolamine with high affinity in the absence of ATP and ATP binding and hydrolysis induce a protein conformational change that causes the dissociation of N-retinylidene-phosphatidylethanolamine. This is Retinal-specific phospholipid-transporting ATPase ABCA4 from Mus musculus (Mouse).